The primary structure comprises 229 residues: MSKKKAFTSLLYLASIVFLPWWISLSFNKSLESWVTDWWNTRQSEIFWNDIQEKNIIKNFIELEEILLLEEMIKEDSETHLQNLRIGIHKETLQLIKIHNEDHIHTILHFSTNIICFVILSGYSILGNEELVILNSWAQEFIYNLSDTIKAFWILLLTDFFIGFHSTRGWELMIGFVYKDFGFAHNDQILSSLVCIFPVILDTLFKFWVFRYLNCVSPSLVVIYHSMNE.

4 helical membrane passes run 7–27 (FTSLLYLASIVFLPWWISLSF), 114–134 (IICFVILSGYSILGNEELVIL), 145–165 (LSDTIKAFWILLLTDFFIGFH), and 189–209 (ILSSLVCIFPVILDTLFKFWV).

Belongs to the CemA family.

The protein localises to the plastid. It is found in the chloroplast inner membrane. It catalyses the reaction K(+)(in) + H(+)(out) = K(+)(out) + H(+)(in). In terms of biological role, contributes to K(+)/H(+) antiport activity by supporting proton efflux to control proton extrusion and homeostasis in chloroplasts in a light-dependent manner to modulate photosynthesis. Prevents excessive induction of non-photochemical quenching (NPQ) under continuous-light conditions. Indirectly promotes efficient inorganic carbon uptake into chloroplasts. The chain is Potassium/proton antiporter CemA from Daucus carota (Wild carrot).